Consider the following 192-residue polypeptide: Probable nicotinate-nucleotide adenylyltransferase (192 aa).

The protein belongs to the NadD family.

It catalyses the reaction nicotinate beta-D-ribonucleotide + ATP + H(+) = deamido-NAD(+) + diphosphate. Its pathway is cofactor biosynthesis; NAD(+) biosynthesis; deamido-NAD(+) from nicotinate D-ribonucleotide: step 1/1. Catalyzes the reversible adenylation of nicotinate mononucleotide (NaMN) to nicotinic acid adenine dinucleotide (NaAD). The sequence is that of Probable nicotinate-nucleotide adenylyltransferase from Staphylococcus haemolyticus (strain JCSC1435).